A 135-amino-acid chain; its full sequence is MATFHFDLVSPEKLTFSGDVDQVDVPGVEGDFGVLAGHAPVVAAIRPGILTITTGGTPQKIIVLGGLAEVSEKGLTVLADVATSIQELDRAQFADTIASMEAKLAEKEGSELDKAIERLDHFKSIQSQLNTTALH.

It belongs to the ATPase epsilon chain family. As to quaternary structure, F-type ATPases have 2 components, CF(1) - the catalytic core - and CF(0) - the membrane proton channel. CF(1) has five subunits: alpha(3), beta(3), gamma(1), delta(1), epsilon(1). CF(0) has three main subunits: a, b and c.

Its subcellular location is the cell inner membrane. Produces ATP from ADP in the presence of a proton gradient across the membrane. The chain is ATP synthase epsilon chain 1 from Nitrobacter hamburgensis (strain DSM 10229 / NCIMB 13809 / X14).